Reading from the N-terminus, the 317-residue chain is Multivesicular body subunit 12B (317 aa).

Residues Met1–Thr49 form a disordered region. A compositionally biased stretch (pro residues) spans Pro13–Gln22. Residues Met45–Arg191 enclose the MABP domain. Phosphoserine is present on Ser99. A phosphothreonine mark is found at Thr120, Thr202, and Thr203. The tract at residues Pro193–Pro218 is disordered. Low complexity predominate over residues Ser198–Ala214. A Phosphoserine modification is found at Ser222. The region spanning Met252–Ala301 is the UMA domain. Positions Glu297–Ser317 are disordered. Ser307 carries the post-translational modification Phosphoserine.

Belongs to the MVB12 family. As to quaternary structure, component of the ESCRT-I complex (endosomal sorting complex required for transport I) which consists of TSG101, VPS28, a VPS37 protein (VPS37A to -D) and MVB12A or MVB12B in a 1:1:1:1 stoichiometry. Interacts with TSG101; the association appears to be mediated by the TSG101-VPS37 binary subcomplex. Interacts with VPS28. Interacts with VPS37B; the association appears to be mediated by the TSG101-VPS37 binary subcomplex. Interacts with VPS37C; the association appears to be mediated by the TSG101-VPS37 binary subcomplex.

Its subcellular location is the endosome. It localises to the late endosome membrane. Functionally, component of the ESCRT-I complex, a regulator of vesicular trafficking process. Required for the sorting of endocytic ubiquitinated cargos into multivesicular bodies. This chain is Multivesicular body subunit 12B (Mvb12b), found in Mus musculus (Mouse).